Reading from the N-terminus, the 776-residue chain is Conserved oligomeric Golgi complex subunit 4 (776 aa).

Ser342 and Ser345 each carry phosphoserine.

This sequence belongs to the COG4 family. Component of the conserved oligomeric Golgi complex which is composed of eight different subunits and is required for normal Golgi morphology and localization.

The protein localises to the golgi apparatus membrane. In terms of biological role, required for normal Golgi function. This is Conserved oligomeric Golgi complex subunit 4 from Drosophila melanogaster (Fruit fly).